The primary structure comprises 210 residues: DNA-directed RNA polymerase subunit 5-like protein 1 (210 aa).

It belongs to the archaeal Rpo5/eukaryotic RPB5 RNA polymerase subunit family.

The protein resides in the nucleus. The protein is DNA-directed RNA polymerase subunit 5-like protein 1 (NRPB5L1) of Arabidopsis thaliana (Mouse-ear cress).